Reading from the N-terminus, the 345-residue chain is Neuropeptide receptor 15 (345 aa).

Over Met1 to Cys11 the chain is Extracellular. A helical transmembrane segment spans residues Phe12–Ala32. Residues Gly33–Ser40 are Cytoplasmic-facing. A helical membrane pass occupies residues Val41 to Ile61. Topologically, residues Pro62–Cys90 are extracellular. The cysteines at positions 82 and 171 are disulfide-linked. A helical transmembrane segment spans residues Val91–Ile111. At Val112 to Asn125 the chain is on the cytoplasmic side. A helical transmembrane segment spans residues Val126 to Val146. The Extracellular portion of the chain corresponds to Trp147–Thr187. Residues Glu188 to Ala208 traverse the membrane as a helical segment. The Cytoplasmic segment spans residues Lys209 to Lys246. The chain crosses the membrane as a helical span at residues Met247–Leu267. Residues Ser268–Asp281 are Extracellular-facing. A helical membrane pass occupies residues Phe282–Phe304. Residues Ser305–Asn345 lie on the Cytoplasmic side of the membrane.

This sequence belongs to the G-protein coupled receptor 1 family. As to expression, expressed in pharyngeal muscle and AWC, ASG, ASE, ASI, and ASJ sensory neurons. Expressed in ASI neuron. Expressed in AFD neurons and in AVK interneuron.

It is found in the cell membrane. Functionally, probable receptor for neuropeptide ligand nlp-8 that plays a role in octopamine signaling and specifically, the octopamine inhibition of aversion responses in olfactory sensory neurons. Plays a crucial role in daf-7 expression. Acts in concert with gpa-4 to activate TGF-beta-like daf-7 secretion in the ASI neuron, thereby promoting larval development and inhibition of dauer diapause. Suppresses immune response against pathogenic infection by inhibiting transcription regulators elt-2 and hlh-30 in ASJ neuron. Promotes pathogen avoidance behavior via intestinal gon-2, independent of aerotaxis. This Caenorhabditis elegans protein is Neuropeptide receptor 15 (npr-15).